Reading from the N-terminus, the 455-residue chain is Beta-1,3-galactosyl-O-glycosyl-glycoprotein beta-1,6-N-acetylglucosaminyltransferase 4 (455 aa).

The Cytoplasmic portion of the chain corresponds to 1–13; the sequence is MKIFRCCFKYTLQ. A helical; Signal-anchor for type II membrane protein transmembrane segment spans residues 14–34; the sequence is QKLFILLLTLWLFSLLKLLNV. The Lumenal segment spans residues 35–455; it reads GRLLFPQRDI…TEGTRQSHTL (421 aa). The N-linked (GlcNAc...) asparagine glycan is linked to Asn-73. Cystine bridges form between Cys-74-Cys-228, Cys-162-Cys-383, Cys-183-Cys-210, and Cys-392-Cys-424. 2 N-linked (GlcNAc...) asparagine glycosylation sites follow: Asn-287 and Asn-382.

This sequence belongs to the glycosyltransferase 14 family.

The protein localises to the golgi apparatus membrane. The catalysed reaction is a 3-O-[beta-D-galactosyl-(1-&gt;3)-N-acetyl-alpha-D-galactosaminyl]-L-seryl-[protein] + UDP-N-acetyl-alpha-D-glucosamine = 3-O-{beta-D-galactosyl-(1-&gt;3)-[N-acetyl-beta-D-glucosaminyl-(1-&gt;6)]-N-acetyl-alpha-D-galactosaminyl}-L-seryl-[protein] + UDP + H(+). It carries out the reaction a 3-O-[beta-D-galactosyl-(1-&gt;3)-N-acetyl-alpha-D-galactosaminyl]-L-threonyl-[protein] + UDP-N-acetyl-alpha-D-glucosamine = a 3-O-{beta-D-galactosyl-(1-&gt;3)-[N-acetyl-beta-D-glucosaminyl-(1-&gt;6)]-N-acetyl-alpha-D-galactosaminyl}-L-threonyl-[protein] + UDP + H(+). It functions in the pathway protein modification; protein glycosylation. Its function is as follows. Glycosyltransferase that mediates core 2 O-glycan branching, an important step in mucin-type biosynthesis. Does not have core 4 O-glycan or I-branching enzyme activity. This Mus musculus (Mouse) protein is Beta-1,3-galactosyl-O-glycosyl-glycoprotein beta-1,6-N-acetylglucosaminyltransferase 4 (Gcnt4).